A 405-amino-acid polypeptide reads, in one-letter code: Na(+)-translocating NADH-quinone reductase subunit F (405 aa).

A helical transmembrane segment spans residues 3–23 (IILGIVMFTVIVLVLALMILF). In terms of domain architecture, 2Fe-2S ferredoxin-type spans 32 to 124 (GDITIKVNGE…DMDIEVPEEV (93 aa)). [2Fe-2S] cluster-binding residues include C67, C73, C76, and C108. The region spanning 127–267 (VKKWECTVIS…SGPFGEFFAK (141 aa)) is the FAD-binding FR-type domain. The tract at residues 270 to 387 (DAEMVFIGGG…PIMNQSVIKM (118 aa)) is catalytic.

It belongs to the NqrF family. In terms of assembly, composed of six subunits; NqrA, NqrB, NqrC, NqrD, NqrE and NqrF. Requires [2Fe-2S] cluster as cofactor. FAD is required as a cofactor.

It is found in the cell inner membrane. It catalyses the reaction a ubiquinone + n Na(+)(in) + NADH + H(+) = a ubiquinol + n Na(+)(out) + NAD(+). NQR complex catalyzes the reduction of ubiquinone-1 to ubiquinol by two successive reactions, coupled with the transport of Na(+) ions from the cytoplasm to the periplasm. The first step is catalyzed by NqrF, which accepts electrons from NADH and reduces ubiquinone-1 to ubisemiquinone by a one-electron transfer pathway. This Neisseria meningitidis serogroup B (strain ATCC BAA-335 / MC58) protein is Na(+)-translocating NADH-quinone reductase subunit F.